A 554-amino-acid chain; its full sequence is Oxygen-dependent choline dehydrogenase (554 aa).

4–33 is an FAD binding site; that stretch reads DYIIIGAGSAGNVLATRLTEDPNTTVLLLE. The Proton acceptor role is filled by H473.

It belongs to the GMC oxidoreductase family. The cofactor is FAD.

The catalysed reaction is choline + A = betaine aldehyde + AH2. It carries out the reaction betaine aldehyde + NAD(+) + H2O = glycine betaine + NADH + 2 H(+). It participates in amine and polyamine biosynthesis; betaine biosynthesis via choline pathway; betaine aldehyde from choline (cytochrome c reductase route): step 1/1. Functionally, involved in the biosynthesis of the osmoprotectant glycine betaine. Catalyzes the oxidation of choline to betaine aldehyde and betaine aldehyde to glycine betaine at the same rate. This is Oxygen-dependent choline dehydrogenase from Klebsiella pneumoniae subsp. pneumoniae (strain ATCC 700721 / MGH 78578).